The chain runs to 1363 residues: Xanthine dehydrogenase (1363 aa).

The 2Fe-2S ferredoxin-type domain maps to 35–121 (DTIRFYLNGT…GKHVITVEGI (87 aa)). [2Fe-2S] cluster contacts are provided by Cys-73, Cys-78, Cys-81, Cys-103, Cys-142, Cys-145, Cys-177, and Cys-179. The FAD-binding PCMH-type domain occupies 266 to 450 (FGNKRKKWYR…SSLRIPTASE (185 aa)). FAD is bound by residues 294–301 (LIGGSTET), Phe-374, 384–388 (SPAGN), Asp-397, and Lys-459. Positions 798 and 829 each coordinate Mo-molybdopterin. Glu-833 and Arg-911 together coordinate substrate. Arg-943 contributes to the Mo-molybdopterin binding site. The substrate site is built by Phe-945 and Thr-1041. A Mo-molybdopterin-binding site is contributed by Ala-1110. Glu-1295 (proton acceptor) is an active-site residue.

The protein belongs to the xanthine dehydrogenase family. Requires FAD as cofactor. Mo-molybdopterin is required as a cofactor. The cofactor is [2Fe-2S] cluster.

It is found in the peroxisome. It carries out the reaction xanthine + NAD(+) + H2O = urate + NADH + H(+). The catalysed reaction is hypoxanthine + NAD(+) + H2O = xanthine + NADH + H(+). Functionally, key enzyme in purine degradation. Catalyzes the oxidation of hypoxanthine to xanthine. Catalyzes the oxidation of xanthine to uric acid. This is Xanthine dehydrogenase (hxA) from Emericella nidulans (strain FGSC A4 / ATCC 38163 / CBS 112.46 / NRRL 194 / M139) (Aspergillus nidulans).